The following is a 1127-amino-acid chain: Ras guanine nucleotide exchange factor F (1127 aa).

2 disordered regions span residues 1 to 82 (MTDK…SLLN) and 96 to 154 (NSGG…SSSS). Low complexity-rich tracts occupy residues 23 to 53 (NQPS…TTSP) and 67 to 82 (NNNN…SLLN). The segment covering 122–132 (RTSTTLAQFSG) has biased composition (polar residues). Over residues 133–154 (SSLPNTENSSPPPSSSLISSSS) the composition is skewed to low complexity. 5 Kelch repeats span residues 212-261 (GFYL…LYNN), 262-311 (SMYI…VESG), 313-366 (MIVF…MHKG), 367-418 (NMYV…LFQD), and 420-469 (IFIS…VKGN). In terms of domain architecture, LisH spans 557-589 (SHQFVLQLIMEYLERNTYHKVIAAIQKESGVLH). Positions 673-804 (NKVQIKAATF…KLRELKKKLQ (132 aa)) constitute an N-terminal Ras-GEF domain. A Ras-GEF domain is found at 835 to 1062 (DELEIARQMT…YDLNLLSESL (228 aa)). Residues 1090 to 1127 (LGSARELNNSNRDSNNITGSSSNNNSNSSNSLSPIVKL) form a disordered region. Over residues 1103-1127 (SNNITGSSSNNNSNSSNSLSPIVKL) the composition is skewed to low complexity.

Its function is as follows. Promotes the exchange of Ras-bound GDP by GTP. The polypeptide is Ras guanine nucleotide exchange factor F (gefF) (Dictyostelium discoideum (Social amoeba)).